Consider the following 367-residue polypeptide: Alanine racemase (367 aa).

Lys40 serves as the catalytic Proton acceptor; specific for D-alanine. Residue Lys40 is modified to N6-(pyridoxal phosphate)lysine. Residue Arg136 participates in substrate binding. Residue Tyr263 is the Proton acceptor; specific for L-alanine of the active site. Met310 is a substrate binding site.

Belongs to the alanine racemase family. Pyridoxal 5'-phosphate serves as cofactor.

It catalyses the reaction L-alanine = D-alanine. It functions in the pathway amino-acid biosynthesis; D-alanine biosynthesis; D-alanine from L-alanine: step 1/1. Its function is as follows. Catalyzes the interconversion of L-alanine and D-alanine. May also act on other amino acids. The polypeptide is Alanine racemase (alr) (Streptococcus thermophilus (strain CNRZ 1066)).